A 231-amino-acid polypeptide reads, in one-letter code: Killer cell lectin-like receptor subfamily F member 1 (231 aa).

At Met-1–Lys-38 the chain is on the cytoplasmic side. The residue at position 7 (Tyr-7) is a Phosphotyrosine. Residues Ile-39–Ile-59 traverse the membrane as a helical; Signal-anchor for type II membrane protein segment. Residues Leu-60–Tyr-231 are Extracellular-facing. 4 N-linked (GlcNAc...) asparagine glycosylation sites follow: Asn-77, Asn-91, Asn-96, and Asn-176. A C-type lectin domain is found at Tyr-121 to Gln-230. Cystine bridges form between Cys-142–Cys-229 and Cys-208–Cys-221.

As to quaternary structure, homodimer. Interacts with CLEC2B. Phosphorylated on Tyr-7; this phosphorylation is required for NKp80/KLRF1-mediated cytotoxicity.

It localises to the membrane. Its function is as follows. Functions as an activating receptor involved in immunosurveillance upon binding to various ligands displayed at the surface of myeloid cells. Upon interaction with CLEC2B ligand, stimulates NK-cell cytotoxicity and cytokine production leading to the cytolysis of malignant CLEC2B-expressing myeloid cells. Actviation of the common cytotoxicity pathway involves SRC and SYK kinases. This is Killer cell lectin-like receptor subfamily F member 1 (KLRF1) from Macaca fascicularis (Crab-eating macaque).